A 199-amino-acid chain; its full sequence is Carbon disulfide hydrolase (199 aa).

Zn(2+) contacts are provided by C36, H91, and C94.

The protein belongs to the beta-class carbonic anhydrase family. In terms of assembly, exists as both octamers and hexadecamers in solution. The hexadecameric homooligomer may form a catenane, through interactions of two interlocked octameric rings. The cofactor is Zn(2+).

The enzyme catalyses carbon disulfide + 2 H2O = 2 hydrogen sulfide + CO2 + 2 H(+). The protein operates within sulfur metabolism; hydrogen sulfide biosynthesis. Catalyzes the conversion of carbon disulfide into hydrogen sulfide and carbon dioxide, with carbonyl sulfide as an intermediate. Likely plays a key role in sulfur metabolism that allows A.thiooxidans G8 to grow on carbon disulfide as the main carbon and energy source. Does not show carbonic anhydrase activity (hydration of CO(2) to carbonate). The polypeptide is Carbon disulfide hydrolase (Acidithiobacillus thiooxidans (Thiobacillus thiooxidans)).